The sequence spans 341 residues: HMG box-containing protein C10F6.08c (341 aa).

The span at 68-77 (SEAKSREFGQ) shows a compositional bias: basic and acidic residues. 2 disordered regions span residues 68–195 (SEAK…SNAK) and 236–341 (LTEE…SSNA). 2 stretches are compositionally biased toward polar residues: residues 116 to 157 (DTNV…QVVQ) and 165 to 177 (NTDP…ITNL). Residues 178-195 (KTESSKSSGAKKATSNAK) are compositionally biased toward low complexity. A DNA-binding region (HMG box) is located at residues 195 to 263 (KITDTMLFNH…KAREARRRRS (69 aa)). Basic and acidic residues-rich tracts occupy residues 238-256 (EEEK…EKAR) and 269-304 (KLEK…GQKE). Phosphothreonine is present on residues Thr-314 and Thr-315. Ser-316 carries the phosphoserine modification.

The protein localises to the nucleus. The chain is HMG box-containing protein C10F6.08c from Schizosaccharomyces pombe (strain 972 / ATCC 24843) (Fission yeast).